The chain runs to 469 residues: IME2-dependent-signaling protein (469 aa).

At M1 the chain carries N-acetylmethionine. Position 13 is a phosphothreonine (T13). Disordered regions lie at residues K22–M55, A67–Q92, and D117–T143. 3 positions are modified to phosphoserine: S23, S27, and S39. Polar residues-rich tracts occupy residues S25 to G42 and A67 to Q82. Phosphoserine is present on residues S122, S130, S136, S147, and S148.

Seems to act indirectly to modify IME2 activity, thus permitting IME2 to carry out later meiotic functions. The chain is IME2-dependent-signaling protein (IDS2) from Saccharomyces cerevisiae (strain ATCC 204508 / S288c) (Baker's yeast).